Consider the following 362-residue polypeptide: 3-dehydroquinate synthase (362 aa).

Residues 95 to 99, 119 to 120, Lys132, and Lys141 each bind NAD(+); these read GVVGD and TT. Zn(2+)-binding residues include Glu174, His238, and His255.

Belongs to the sugar phosphate cyclases superfamily. Dehydroquinate synthase family. Co(2+) is required as a cofactor. Zn(2+) serves as cofactor. It depends on NAD(+) as a cofactor.

The protein localises to the cytoplasm. The enzyme catalyses 7-phospho-2-dehydro-3-deoxy-D-arabino-heptonate = 3-dehydroquinate + phosphate. The protein operates within metabolic intermediate biosynthesis; chorismate biosynthesis; chorismate from D-erythrose 4-phosphate and phosphoenolpyruvate: step 2/7. In terms of biological role, catalyzes the conversion of 3-deoxy-D-arabino-heptulosonate 7-phosphate (DAHP) to dehydroquinate (DHQ). This is 3-dehydroquinate synthase from Chlorobium luteolum (strain DSM 273 / BCRC 81028 / 2530) (Pelodictyon luteolum).